The following is a 144-amino-acid chain: Prefoldin subunit alpha (144 aa).

This sequence belongs to the prefoldin alpha subunit family. Heterohexamer of two alpha and four beta subunits.

It is found in the cytoplasm. In terms of biological role, molecular chaperone capable of stabilizing a range of proteins. Seems to fulfill an ATP-independent, HSP70-like function in archaeal de novo protein folding. In Metallosphaera sedula (strain ATCC 51363 / DSM 5348 / JCM 9185 / NBRC 15509 / TH2), this protein is Prefoldin subunit alpha.